Consider the following 154-residue polypeptide: Transcriptional repressor NrdR (154 aa).

A zinc finger spans residues 3 to 34 (CPFCGANDTKVIDSRLVAEGEQVRRRRECVAC). Residues 49-139 (PRLIKQDGTR…VYRRFQDLDE (91 aa)) enclose the ATP-cone domain.

It belongs to the NrdR family. Zn(2+) is required as a cofactor.

Its function is as follows. Negatively regulates transcription of bacterial ribonucleotide reductase nrd genes and operons by binding to NrdR-boxes. This is Transcriptional repressor NrdR from Pseudomonas entomophila (strain L48).